The primary structure comprises 962 residues: Nonribosomal peptide synthetase atqA (962 aa).

Residues 34 to 462 (AANTTEGIIA…DGRTKEMVNI (429 aa)) form an adenylation (A) domain region. The 78-residue stretch at 595–672 (SAEEATILSI…GLCQRIAATS (78 aa)) folds into the Carrier domain. Ser630 is modified (O-(pantetheine 4'-phosphoryl)serine). The segment at 694–951 (PLWLVHPGVG…KPEYVANFAK (258 aa)) is thioesterase (TE) domain.

This sequence belongs to the NRP synthetase family.

Its pathway is secondary metabolite biosynthesis. Nonribosomal peptide synthetase; part of the gene cluster that mediates the biosynthesis of asterriquinone CT5, a natural product that displays potential biological activities including antitumor and insulin mimic activities. The nonribosomal peptide synthetase atqA is responsible for the production of the benzoquinone derivative didemethylasterriquinone D (DDAQ D), via condensation of 2 indole pyruvic acid (IPA) molecules. The symmetric connectivity of the 2 IPA molecules is thought to arise by head-to-tail dual Claisen condensations catalyzed by the TE domain of atqA. DDAQ D represents the core structure of asterriquinones and is further modified by yet unidentified tailoring enzymes to lead to the production of asterriquinone CT5. The polypeptide is Nonribosomal peptide synthetase atqA (Aspergillus terreus (strain NIH 2624 / FGSC A1156)).